The following is a 232-amino-acid chain: 5'-methylthioadenosine/S-adenosylhomocysteine nucleosidase (232 aa).

Glu-12 acts as the Proton acceptor in catalysis. Substrate contacts are provided by residues Gly-78, Ile-152, and Met-173–Glu-174. Asp-197 (proton donor) is an active-site residue.

This sequence belongs to the PNP/UDP phosphorylase family. MtnN subfamily. Homodimer.

It carries out the reaction S-adenosyl-L-homocysteine + H2O = S-(5-deoxy-D-ribos-5-yl)-L-homocysteine + adenine. The catalysed reaction is S-methyl-5'-thioadenosine + H2O = 5-(methylsulfanyl)-D-ribose + adenine. The enzyme catalyses 5'-deoxyadenosine + H2O = 5-deoxy-D-ribose + adenine. The protein operates within amino-acid biosynthesis; L-methionine biosynthesis via salvage pathway; S-methyl-5-thio-alpha-D-ribose 1-phosphate from S-methyl-5'-thioadenosine (hydrolase route): step 1/2. Its function is as follows. Catalyzes the irreversible cleavage of the glycosidic bond in both 5'-methylthioadenosine (MTA) and S-adenosylhomocysteine (SAH/AdoHcy) to adenine and the corresponding thioribose, 5'-methylthioribose and S-ribosylhomocysteine, respectively. Also cleaves 5'-deoxyadenosine, a toxic by-product of radical S-adenosylmethionine (SAM) enzymes, into 5-deoxyribose and adenine. Thus, is required for in vivo function of the radical SAM enzymes biotin synthase and lipoic acid synthase, that are inhibited by 5'-deoxyadenosine accumulation. The protein is 5'-methylthioadenosine/S-adenosylhomocysteine nucleosidase of Escherichia fergusonii (strain ATCC 35469 / DSM 13698 / CCUG 18766 / IAM 14443 / JCM 21226 / LMG 7866 / NBRC 102419 / NCTC 12128 / CDC 0568-73).